The sequence spans 764 residues: Complement factor B (764 aa).

The N-terminal stretch at 1–25 (MGSNLSPQLCLMPFILGLLSGGVTT) is a signal peptide. Sushi domains are found at residues 35–100 (GSCS…ECRA), 101–160 (IHCP…ICDN), and 163–220 (GYCS…SCQD). 6 disulfides stabilise this stretch: cysteine 37/cysteine 76, cysteine 62/cysteine 98, cysteine 103/cysteine 145, cysteine 131/cysteine 158, cysteine 165/cysteine 205, and cysteine 191/cysteine 218. Asparagine 122 and asparagine 142 each carry an N-linked (GlcNAc...) asparagine glycan. The region spanning 270 to 469 (NIYLVLDGSD…NLEDVFYQMI (200 aa)) is the VWFA domain. Residues serine 278 and serine 280 each coordinate Mg(2+). Mn(2+) contacts are provided by serine 278 and serine 280. Asparagine 285 carries N-linked (GlcNAc...) asparagine glycosylation. Residue lysine 291 is glycosylated (N-linked (Glc) (glycation) lysine). Threonine 353 is a binding site for Mg(2+). Mn(2+) is bound at residue threonine 353. A glycan (N-linked (GlcNAc...) asparagine) is linked at asparagine 378. Residues 477–757 (LCGMVWEHRK…VLPWLKEKLQ (281 aa)) enclose the Peptidase S1 domain. Cystine bridges form between cysteine 478–cysteine 596, cysteine 511–cysteine 527, cysteine 599–cysteine 615, cysteine 656–cysteine 682, and cysteine 695–cysteine 725. Catalysis depends on charge relay system residues histidine 526 and aspartate 576. The Charge relay system role is filled by serine 699.

The protein belongs to the peptidase S1 family. As to quaternary structure, monomer. Interacts with complement C3b; this interaction is dependent on the presence of Mg(2+). Catalytic component of the C3 convertase of the alternative complement pathway, also named C3bBb, composed of complement factor B Bb and complement C3b. Catalytic component of the C5 convertase of the alternative complement pathway, also named C3bBb3b, composed of complement factor B Bb and additional molecules of complement C3b. Interacts to CFP; this interaction contributes to the stabilization of the active C3-convertase enzyme complex. Requires Mg(2+) as cofactor. It depends on Mn(2+) as a cofactor. In terms of processing, cleaved by CFD following activation of the alternative complement system, generating Ba and Bb chains. Cleavage and activation takes place when CFB is already associated with complement C3b.

It is found in the secreted. The protein localises to the cell surface. It carries out the reaction Cleavage of Arg-|-Ser bond in complement component C3 alpha-chain to yield C3a and C3b, and Arg-|-Xaa bond in complement component C5 alpha-chain to yield C5a and C5b.. In terms of biological role, precursor of the catalytic component of the C3 and C5 convertase complexes of the alternative pathway of the complement system, a cascade of proteins that leads to phagocytosis and breakdown of pathogens and signaling that strengthens the adaptive immune system. The alternative complement pathway acts as an amplification loop that enhances other complement pathways (classical, lectin and GZMK) by promoting formation of additional C3 and C5 convertases. CFB is cleaved and activated by CFD to generate Ba and Bb chains; Bb chain constituting the catalytic component of the C3 and C5 convertases. Serine protease component of the complement C3 and C5 convertase complexes of the alternative complement pathway. Following cleavage and activation by factor D (CFD), forms the C3 convertase together with complement C3b. As part of the C3 convertase, cleaves and activates C3 into C3a anaphylatoxin and C3b opsonin, the next components of the complement pathways. When an additional complement C3b molecule binds to the C3 convertase, forms the C5 convertase, which cleaves and activates C5 into C5a anaphylatoxin and C5b component of the membrane attack complex. Functionally, involved in proliferation and differentiation of preactivated B-lymphocytes, rapid spreading of peripheral blood monocytes, stimulation of lymphocyte blastogenesis and lysis of erythrocytes. This is Complement factor B from Homo sapiens (Human).